A 262-amino-acid polypeptide reads, in one-letter code: Putative hydro-lyase cu1581 (262 aa).

Belongs to the D-glutamate cyclase family.

In Corynebacterium urealyticum (strain ATCC 43042 / DSM 7109), this protein is Putative hydro-lyase cu1581.